A 70-amino-acid chain; its full sequence is UPF0519 protein B (70 aa).

It belongs to the UPF0519 family.

This chain is UPF0519 protein B (sigN122), found in Dictyostelium discoideum (Social amoeba).